The chain runs to 354 residues: UDP-2,3-diacetamido-2,3-dideoxy-D-glucuronate 2-epimerase (354 aa).

The protein belongs to the UDP-N-acetylglucosamine 2-epimerase family.

The enzyme catalyses UDP-2,3-diacetamido-2,3-dideoxy-alpha-D-glucuronate = UDP-2,3-diacetamido-2,3-dideoxy-alpha-D-mannuronate. Its pathway is bacterial outer membrane biogenesis; LPS O-antigen biosynthesis. Functionally, plays a role in the biosynthesis of B-band O antigen for serotype O5. Catalyzes the epimerization of UDP-2,3-diacetamido-2,3-dideoxy-alpha-D-glucuronic acid (UDP-alpha-D-GlcNAc3NAcA) to UDP-2,3-diacetamido-2,3-dideoxy-alpha-D-mannuronic acid (UDP-alpha-D-ManNAc3NAcA). Exhibits high specificity towards the substrate as UDP-alpha-D-GlcNAc, UDP-alpha-D-GlcNAcA (UDP-2-acetamido-2-deoxy-alpha-D-glucuronic acid) and UDP-alpha-D-GlcNAc3NAc (UDP-2,3-diacetamido-2,3-dideoxy-alpha-D-glucose) cannot act as substrates. This chain is UDP-2,3-diacetamido-2,3-dideoxy-D-glucuronate 2-epimerase, found in Pseudomonas aeruginosa (strain ATCC 15692 / DSM 22644 / CIP 104116 / JCM 14847 / LMG 12228 / 1C / PRS 101 / PAO1).